Consider the following 226-residue polypeptide: Oxaloacetate tautomerase FAHD2, mitochondrial (226 aa).

The transit peptide at 1 to 30 (MAAAAQRLLAASTKIVGVGRNFVAHAKELG) directs the protein to the mitochondrion. Glutamate 69, glutamate 71, and aspartate 100 together coordinate Mg(2+).

Belongs to the FAH family. Mg(2+) is required as a cofactor. Mn(2+) serves as cofactor.

Its subcellular location is the mitochondrion. The enzyme catalyses oxaloacetate = enol-oxaloacetate. Tautomerase that converts enol-oxaloacetate, a strong inhibitor of succinate dehydrogenase, to the physiological keto form of oxaloacetate. The chain is Oxaloacetate tautomerase FAHD2, mitochondrial from Oryza sativa subsp. japonica (Rice).